A 226-amino-acid polypeptide reads, in one-letter code: Ribonuclease 3 (226 aa).

In terms of domain architecture, RNase III spans 6–128; it reads INRLQRKLGY…LIGGVFLDSD (123 aa). A Mg(2+)-binding site is contributed by E41. D45 is a catalytic residue. Mg(2+) is bound by residues D114 and E117. E117 is a catalytic residue. Residues 155-225 form the DRBM domain; it reads DPKTRLQEYL…AEQALKKLEL (71 aa).

Belongs to the ribonuclease III family. In terms of assembly, homodimer. It depends on Mg(2+) as a cofactor.

It localises to the cytoplasm. It carries out the reaction Endonucleolytic cleavage to 5'-phosphomonoester.. In terms of biological role, digests double-stranded RNA. Involved in the processing of primary rRNA transcript to yield the immediate precursors to the large and small rRNAs (23S and 16S). Processes some mRNAs, and tRNAs when they are encoded in the rRNA operon. Processes pre-crRNA and tracrRNA of type II CRISPR loci if present in the organism. In Escherichia coli O139:H28 (strain E24377A / ETEC), this protein is Ribonuclease 3.